We begin with the raw amino-acid sequence, 427 residues long: Serine--tRNA ligase (427 aa).

An L-serine-binding site is contributed by 229 to 231 (TAE). 260–262 (RSE) is a binding site for ATP. Glu-283 is an L-serine binding site. 347–350 (EISS) is a binding site for ATP. An L-serine-binding site is contributed by Ser-383.

It belongs to the class-II aminoacyl-tRNA synthetase family. Type-1 seryl-tRNA synthetase subfamily. As to quaternary structure, homodimer. The tRNA molecule binds across the dimer.

The protein resides in the cytoplasm. The enzyme catalyses tRNA(Ser) + L-serine + ATP = L-seryl-tRNA(Ser) + AMP + diphosphate + H(+). It catalyses the reaction tRNA(Sec) + L-serine + ATP = L-seryl-tRNA(Sec) + AMP + diphosphate + H(+). Its pathway is aminoacyl-tRNA biosynthesis; selenocysteinyl-tRNA(Sec) biosynthesis; L-seryl-tRNA(Sec) from L-serine and tRNA(Sec): step 1/1. Functionally, catalyzes the attachment of serine to tRNA(Ser). Is also able to aminoacylate tRNA(Sec) with serine, to form the misacylated tRNA L-seryl-tRNA(Sec), which will be further converted into selenocysteinyl-tRNA(Sec). In Oleidesulfovibrio alaskensis (strain ATCC BAA-1058 / DSM 17464 / G20) (Desulfovibrio alaskensis), this protein is Serine--tRNA ligase.